The sequence spans 125 residues: Large ribosomal subunit protein bL12 (125 aa).

Belongs to the bacterial ribosomal protein bL12 family. Homodimer. Part of the ribosomal stalk of the 50S ribosomal subunit. Forms a multimeric L10(L12)X complex, where L10 forms an elongated spine to which 2 to 4 L12 dimers bind in a sequential fashion. Binds GTP-bound translation factors.

Its function is as follows. Forms part of the ribosomal stalk which helps the ribosome interact with GTP-bound translation factors. Is thus essential for accurate translation. The protein is Large ribosomal subunit protein bL12 of Ruegeria sp. (strain TM1040) (Silicibacter sp.).